The primary structure comprises 62 residues: Large ribosomal subunit protein bL28 (62 aa).

A disordered region spans residues 1-26 (MARKCYVTGKSPKSGNNRSHALNKTK). The span at 11–20 (SPKSGNNRSH) shows a compositional bias: polar residues.

This sequence belongs to the bacterial ribosomal protein bL28 family.

This chain is Large ribosomal subunit protein bL28, found in Exiguobacterium sibiricum (strain DSM 17290 / CCUG 55495 / CIP 109462 / JCM 13490 / 255-15).